The primary structure comprises 374 residues: Ribonuclease D (374 aa).

The 169-residue stretch at 3–171 (YQLITTDDGL…MAIRLVEETT (169 aa)) folds into the 3'-5' exonuclease domain. One can recognise an HRDC domain in the interval 210–289 (KGRHLACLQK…AETQTMDAAE (80 aa)).

It belongs to the RNase D family. Requires a divalent metal cation as cofactor.

It localises to the cytoplasm. It catalyses the reaction Exonucleolytic cleavage that removes extra residues from the 3'-terminus of tRNA to produce 5'-mononucleotides.. In terms of biological role, exonuclease involved in the 3' processing of various precursor tRNAs. Initiates hydrolysis at the 3'-terminus of an RNA molecule and releases 5'-mononucleotides. The polypeptide is Ribonuclease D (Musicola paradisiaca (strain Ech703) (Dickeya paradisiaca)).